Reading from the N-terminus, the 151-residue chain is UPF0178 protein PSHAb0045 (151 aa).

It belongs to the UPF0178 family.

This Pseudoalteromonas translucida (strain TAC 125) protein is UPF0178 protein PSHAb0045.